Reading from the N-terminus, the 250-residue chain is UPF0758 protein RPB_0700 (250 aa).

Positions 1–27 (MVDPISNAAPPMPADSSERLDPPGFAE) are disordered. One can recognise an MPN domain in the interval 128–250 (VLSSWSAVID…HASLKGLKLF (123 aa)). 3 residues coordinate Zn(2+): H199, H201, and D212. The JAMM motif motif lies at 199-212 (HNHPSGDPTPSQAD).

The protein belongs to the UPF0758 family.

The polypeptide is UPF0758 protein RPB_0700 (Rhodopseudomonas palustris (strain HaA2)).